The chain runs to 174 residues: Actin-related protein 2/3 complex subunit 3 (174 aa).

The protein belongs to the ARPC3 family. In terms of assembly, component of the Arp2/3 complex composed of arp2, act2, arc1/p41-ARC, arc2/p34-ARC, arc3/p21-ARC, arc4/p20-ARC and arc5/p16-ARC.

It localises to the cytoplasm. The protein localises to the cytoskeleton. It is found in the actin patch. In terms of biological role, functions as a component of the Arp2/3 complex which is involved in regulation of actin polymerization and together with an activating nucleation-promoting factor (NPF) mediates the formation of branched actin networks. The polypeptide is Actin-related protein 2/3 complex subunit 3 (arc3) (Schizosaccharomyces pombe (strain 972 / ATCC 24843) (Fission yeast)).